The chain runs to 31 residues: GVIPCGESCVFIPCISSVIGCSCKNKVCYRN.

Residues 1-31 constitute a cross-link (cyclopeptide (Gly-Asn)); that stretch reads GVIPCGESCVFIPCISSVIGCSCKNKVCYRN. 3 disulfides stabilise this stretch: Cys-5/Cys-21, Cys-9/Cys-23, and Cys-14/Cys-28.

Post-translationally, this is a cyclic peptide. In terms of tissue distribution, expressed in fruit, pedicel, root and stem but not in leaf (at protein level).

In terms of biological role, probably participates in a plant defense mechanism. In Chassalia chartacea (Chassalia curviflora), this protein is Chassatide C6.